Reading from the N-terminus, the 366-residue chain is 3-dehydroquinate synthase (366 aa).

NAD(+) is bound by residues 69-74 (DGEAYK), 103-107 (GVIGD), 127-128 (TT), Lys140, and Lys149. Zn(2+)-binding residues include Glu182, His245, and His262.

It belongs to the sugar phosphate cyclases superfamily. Dehydroquinate synthase family. Co(2+) is required as a cofactor. Requires Zn(2+) as cofactor. The cofactor is NAD(+).

The protein localises to the cytoplasm. The enzyme catalyses 7-phospho-2-dehydro-3-deoxy-D-arabino-heptonate = 3-dehydroquinate + phosphate. It functions in the pathway metabolic intermediate biosynthesis; chorismate biosynthesis; chorismate from D-erythrose 4-phosphate and phosphoenolpyruvate: step 2/7. In terms of biological role, catalyzes the conversion of 3-deoxy-D-arabino-heptulosonate 7-phosphate (DAHP) to dehydroquinate (DHQ). In Pseudomonas fluorescens (strain ATCC BAA-477 / NRRL B-23932 / Pf-5), this protein is 3-dehydroquinate synthase.